Reading from the N-terminus, the 227-residue chain is MGASGRLLRAVIMGAPGSGKGTGSSRITKHFELKHLSSGDLLRQNMLQGTEIAVLAKSFIDQGKLIPDDDMTRLALHELKNLTQCSWLLDGFPRTLPQAEALDRVYQIDTVINLNVPFEVIKLRLTARWIHPASGRVYNIEFNPPKTVGIDDLTGEPLIQREDDKPETVIKRLKAYEAQTEPVLQYYQKKGVLETFSGTETNKIRPHVYSFLQMKVPETIQKASVTP.

Gly17, Gly19, Lys20, Gly21, and Thr22 together coordinate GTP. N6-succinyllysine is present on Lys20. Lys29 is modified (N6-acetyllysine; alternate). Lys29 is subject to N6-succinyllysine; alternate. N6-acetyllysine is present on Lys34. At Ser37 the chain carries Phosphoserine. The segment at 37 to 66 is NMP; that stretch reads SSGDLLRQNMLQGTEIAVLAKSFIDQGKLI. Positions 38 and 43 each coordinate AMP. At Lys57 the chain carries N6-succinyllysine. 2 positions are modified to N6-acetyllysine; alternate: Lys64 and Lys80. Lys64 and Lys80 each carry N6-succinyllysine; alternate. Residue Lys64 participates in AMP binding. Residues Gly91, Arg94, and Gln98 each contribute to the AMP site. Residues 127–164 are LID; the sequence is ARWIHPASGRVYNIEFNPPKTVGIDDLTGEPLIQREDD. GTP-binding residues include Arg128, Tyr138, Asn139, Arg161, and Arg172. 2 positions are modified to N6-acetyllysine; alternate: Lys174 and Lys189. N6-succinyllysine; alternate is present on residues Lys174 and Lys189. A GTP-binding site is contributed by Thr201. Residue Lys203 is modified to N6-acetyllysine.

Belongs to the adenylate kinase family. AK3 subfamily. Monomer.

The protein localises to the mitochondrion matrix. It catalyses the reaction a ribonucleoside 5'-triphosphate + AMP = a ribonucleoside 5'-diphosphate + ADP. The catalysed reaction is GTP + AMP = GDP + ADP. It carries out the reaction ITP + AMP = IDP + ADP. Its function is as follows. Mitochondrial adenylate kinase with a specific GTP:AMP phosphotransferase activity. Could also use ITP as phosphate donor. Its physiological function is to recycle GTP into GDP which is necessary for the TCA cycle in the mitochondrial matrix. The polypeptide is GTP:AMP phosphotransferase AK3, mitochondrial (Rattus norvegicus (Rat)).